Reading from the N-terminus, the 560-residue chain is Chaperonin GroEL 2 (560 aa).

Residues 29 to 32 (TLGP), Lys50, 86 to 90 (DGTTT), Gly414, and Asp494 contribute to the ATP site. The tract at residues 524–546 (EDEDDDDGGGGGGGGMPAGGAGG) is disordered. The segment covering 532-546 (GGGGGGGMPAGGAGG) has biased composition (gly residues).

It belongs to the chaperonin (HSP60) family. As to quaternary structure, forms a cylinder of 14 subunits composed of two heptameric rings stacked back-to-back. Interacts with the co-chaperonin GroES.

It is found in the cytoplasm. It catalyses the reaction ATP + H2O + a folded polypeptide = ADP + phosphate + an unfolded polypeptide.. Functionally, together with its co-chaperonin GroES, plays an essential role in assisting protein folding. The GroEL-GroES system forms a nano-cage that allows encapsulation of the non-native substrate proteins and provides a physical environment optimized to promote and accelerate protein folding. The protein is Chaperonin GroEL 2 of Salinibacter ruber (strain DSM 13855 / M31).